Reading from the N-terminus, the 289-residue chain is Acetyl-coenzyme A carboxylase carboxyl transferase subunit beta (289 aa).

Positions 24-289 (LWTNCESCGQ…RQKTVSDAAA (266 aa)) constitute a CoA carboxyltransferase N-terminal domain. Zn(2+) contacts are provided by cysteine 28, cysteine 31, cysteine 47, and cysteine 50. The C4-type zinc-finger motif lies at 28–50 (CESCGQMMLTKELERSEKVCPHC).

This sequence belongs to the AccD/PCCB family. In terms of assembly, acetyl-CoA carboxylase is a heterohexamer composed of biotin carboxyl carrier protein (AccB), biotin carboxylase (AccC) and two subunits each of ACCase subunit alpha (AccA) and ACCase subunit beta (AccD). Zn(2+) serves as cofactor.

The protein resides in the cytoplasm. The enzyme catalyses N(6)-carboxybiotinyl-L-lysyl-[protein] + acetyl-CoA = N(6)-biotinyl-L-lysyl-[protein] + malonyl-CoA. The protein operates within lipid metabolism; malonyl-CoA biosynthesis; malonyl-CoA from acetyl-CoA: step 1/1. Its function is as follows. Component of the acetyl coenzyme A carboxylase (ACC) complex. Biotin carboxylase (BC) catalyzes the carboxylation of biotin on its carrier protein (BCCP) and then the CO(2) group is transferred by the transcarboxylase to acetyl-CoA to form malonyl-CoA. In Gluconobacter oxydans (strain 621H) (Gluconobacter suboxydans), this protein is Acetyl-coenzyme A carboxylase carboxyl transferase subunit beta.